The sequence spans 448 residues: Glutamate--tRNA ligase 2 (448 aa).

Positions 9–19 (PSPTGKLHIGN) match the 'HIGH' region motif. Residues 240–244 (KISKR) carry the 'KMSKS' region motif. Position 243 (lysine 243) interacts with ATP.

Belongs to the class-I aminoacyl-tRNA synthetase family. Glutamate--tRNA ligase type 1 subfamily. Monomer.

The protein localises to the cytoplasm. The enzyme catalyses tRNA(Glu) + L-glutamate + ATP = L-glutamyl-tRNA(Glu) + AMP + diphosphate. In terms of biological role, catalyzes the attachment of glutamate to tRNA(Glu) in a two-step reaction: glutamate is first activated by ATP to form Glu-AMP and then transferred to the acceptor end of tRNA(Glu). The protein is Glutamate--tRNA ligase 2 of Orientia tsutsugamushi (strain Boryong) (Rickettsia tsutsugamushi).